The sequence spans 938 residues: Probable glutamyl endopeptidase, chloroplastic (938 aa).

A chloroplast-targeting transit peptide spans 1-54 (MSSLTILLQRACLRFALLPVPPLRAPLRPPRRPLGLPRRSAMSSSAASRLSHIV). Positions 58-76 (GGAAGESSEPPAAAAAASG) are enriched in low complexity. Residues 58-77 (GGAAGESSEPPAAAAAASGL) are disordered. Active-site charge relay system residues include Ser762, Asp836, and His870. A compositionally biased stretch (polar residues) spans 897-913 (SSKTDSDSVADTENKTV). Positions 897–938 (SSKTDSDSVADTENKTVSASGGGAPCEGPEAEGFSSMQRSLL) are disordered.

The protein belongs to the peptidase S9D family.

The protein localises to the plastid. The protein resides in the chloroplast stroma. Functionally, serine-type protease active in vitro against the LHCII N-terminal. Cleaves its substrate on the carboxy-side of Glu residues. In Oryza sativa subsp. japonica (Rice), this protein is Probable glutamyl endopeptidase, chloroplastic (GEP).